We begin with the raw amino-acid sequence, 288 residues long: ATP synthase gamma chain (288 aa).

The protein belongs to the ATPase gamma chain family. F-type ATPases have 2 components, CF(1) - the catalytic core - and CF(0) - the membrane proton channel. CF(1) has five subunits: alpha(3), beta(3), gamma(1), delta(1), epsilon(1). CF(0) has three main subunits: a, b and c.

It is found in the cell inner membrane. Functionally, produces ATP from ADP in the presence of a proton gradient across the membrane. The gamma chain is believed to be important in regulating ATPase activity and the flow of protons through the CF(0) complex. This is ATP synthase gamma chain from Glaesserella parasuis serovar 5 (strain SH0165) (Haemophilus parasuis).